We begin with the raw amino-acid sequence, 276 residues long: Large ribosomal subunit protein uL2 (276 aa).

A disordered region spans residues 221–276 (RGSVMNPNDHPHGGGEGRAPIGRKAPVTPWGKPTLGLKTRKKKNKSDQYIIRRRKK).

This sequence belongs to the universal ribosomal protein uL2 family. In terms of assembly, part of the 50S ribosomal subunit. Forms a bridge to the 30S subunit in the 70S ribosome.

Functionally, one of the primary rRNA binding proteins. Required for association of the 30S and 50S subunits to form the 70S ribosome, for tRNA binding and peptide bond formation. It has been suggested to have peptidyltransferase activity; this is somewhat controversial. Makes several contacts with the 16S rRNA in the 70S ribosome. In Brevibacillus brevis (strain 47 / JCM 6285 / NBRC 100599), this protein is Large ribosomal subunit protein uL2.